The sequence spans 190 residues: Somatotropin (190 aa).

The signal sequence occupies residues 1–17 (MNRVILLLSVMCVGVSS). Intrachain disulfides connect Cys-69–Cys-163 and Cys-180–Cys-188.

Belongs to the somatotropin/prolactin family.

Its subcellular location is the secreted. Its function is as follows. Growth hormone plays an important role in growth control and is involved in the regulation of several anabolic processes. Implicated as an osmoregulatory substance important for seawater adaptation. The protein is Somatotropin (gh) of Paralichthys olivaceus (Bastard halibut).